The following is a 180-amino-acid chain: Large ribosomal subunit protein uL5 (180 aa).

This sequence belongs to the universal ribosomal protein uL5 family. Part of the 50S ribosomal subunit; part of the 5S rRNA/L5/L18/L25 subcomplex. Contacts the 5S rRNA and the P site tRNA. Forms a bridge to the 30S subunit in the 70S ribosome.

This is one of the proteins that bind and probably mediate the attachment of the 5S RNA into the large ribosomal subunit, where it forms part of the central protuberance. In the 70S ribosome it contacts protein S13 of the 30S subunit (bridge B1b), connecting the 2 subunits; this bridge is implicated in subunit movement. Contacts the P site tRNA; the 5S rRNA and some of its associated proteins might help stabilize positioning of ribosome-bound tRNAs. The polypeptide is Large ribosomal subunit protein uL5 (Streptococcus pyogenes serotype M49 (strain NZ131)).